A 298-amino-acid polypeptide reads, in one-letter code: Anamorsin homolog (298 aa).

The N-terminal SAM-like domain stretch occupies residues 1–143; it reads MTQLIITYQS…IKAEKPSWKP (143 aa). Positions 143–162 are linker; sequence PEEGKVLVDDIDLEGSVPDI. [2Fe-2S] cluster is bound by residues C175, C182, C185, and C187. The fe-S binding site A stretch occupies residues 175–187; it reads CKSKERACNNCNC. 4 residues coordinate [4Fe-4S] cluster: C218, C221, C229, and C232. 2 consecutive short sequence motifs (cx2C motif) follow at residues 218 to 221 and 229 to 232; these read CGNC and CSGC. The tract at residues 218–232 is fe-S binding site B; that stretch reads CGNCYLGDAFRCSGC.

This sequence belongs to the anamorsin family. As to quaternary structure, monomer. Requires [2Fe-2S] cluster as cofactor. [4Fe-4S] cluster is required as a cofactor.

It is found in the cytoplasm. The protein resides in the mitochondrion intermembrane space. Component of the cytosolic iron-sulfur (Fe-S) protein assembly (CIA) machinery. Required for the maturation of extramitochondrial Fe-S proteins. Part of an electron transfer chain functioning in an early step of cytosolic Fe-S biogenesis, facilitating the de novo assembly of a [4Fe-4S] cluster on the cytosolic Fe-S scaffold complex. Electrons are transferred from NADPH via a FAD- and FMN-containing diflavin oxidoreductase. Together with the diflavin oxidoreductase, also required for the assembly of the diferric tyrosyl radical cofactor of ribonucleotide reductase (RNR), probably by providing electrons for reduction during radical cofactor maturation in the catalytic small subunit. The protein is Anamorsin homolog of Cryptosporidium hominis.